The primary structure comprises 391 residues: Fructose-bisphosphate aldolase 3, chloroplastic (391 aa).

A chloroplast-targeting transit peptide spans 1-40 (MASASFVKPNTLSSPWIGQRSFAHTSASSSPPPRVSFAIR). Position 88 (Arg-88) interacts with substrate. Ser-150 is subject to Phosphoserine. Residue Lys-178 participates in substrate binding. Ser-208 carries the post-translational modification Phosphoserine. Glu-218 serves as the catalytic Proton acceptor. Residue Lys-260 is the Schiff-base intermediate with dihydroxyacetone-P of the active site. 302–304 (SGG) is a binding site for substrate. At Lys-387 the chain carries N6,N6,N6-trimethyllysine.

This sequence belongs to the class I fructose-bisphosphate aldolase family. As to quaternary structure, homotetramer. Post-translationally, can be trimethylated at Lys-387 by LSMT-L, but the trimethylation has no effect in vitro. In terms of processing, S-glutathionylated. As to expression, expressed in roots, and at low levels in rosettes leaves, cauline leaves, stems and flowers.

The protein localises to the plastid. The protein resides in the chloroplast. It is found in the plastoglobule. It carries out the reaction beta-D-fructose 1,6-bisphosphate = D-glyceraldehyde 3-phosphate + dihydroxyacetone phosphate. It functions in the pathway carbohydrate degradation; glycolysis; D-glyceraldehyde 3-phosphate and glycerone phosphate from D-glucose: step 4/4. Functionally, plays a key role in glycolysis and gluconeogenesis. In Arabidopsis thaliana (Mouse-ear cress), this protein is Fructose-bisphosphate aldolase 3, chloroplastic.